We begin with the raw amino-acid sequence, 229 residues long: Cytochrome c oxidase subunit 2 (229 aa).

The Mitochondrial intermembrane segment spans residues 1 to 26; the sequence is MSTWANLGLQDSASPLMEQLIFFHDH. The chain crosses the membrane as a helical span at residues 27–48; the sequence is ALLILVMITILVGYLMFMLFFN. Residues 49-62 lie on the Mitochondrial matrix side of the membrane; the sequence is SYINRFLLHGQLIE. A helical transmembrane segment spans residues 63–82; it reads MIWTILPAIILLFIAMPSLR. Residues 83–229 lie on the Mitochondrial intermembrane side of the membrane; sequence LLYLLDEINE…IKWIASKVNS (147 aa). The Cu cation site is built by histidine 161, cysteine 196, glutamate 198, cysteine 200, histidine 204, and methionine 207. Glutamate 198 serves as a coordination point for Mg(2+).

This sequence belongs to the cytochrome c oxidase subunit 2 family. Component of the cytochrome c oxidase (complex IV, CIV), a multisubunit enzyme composed of a catalytic core of 3 subunits and several supernumerary subunits. The complex exists as a monomer or a dimer and forms supercomplexes (SCs) in the inner mitochondrial membrane with ubiquinol-cytochrome c oxidoreductase (cytochrome b-c1 complex, complex III, CIII). Cu cation is required as a cofactor.

It is found in the mitochondrion inner membrane. It carries out the reaction 4 Fe(II)-[cytochrome c] + O2 + 8 H(+)(in) = 4 Fe(III)-[cytochrome c] + 2 H2O + 4 H(+)(out). In terms of biological role, component of the cytochrome c oxidase, the last enzyme in the mitochondrial electron transport chain which drives oxidative phosphorylation. The respiratory chain contains 3 multisubunit complexes succinate dehydrogenase (complex II, CII), ubiquinol-cytochrome c oxidoreductase (cytochrome b-c1 complex, complex III, CIII) and cytochrome c oxidase (complex IV, CIV), that cooperate to transfer electrons derived from NADH and succinate to molecular oxygen, creating an electrochemical gradient over the inner membrane that drives transmembrane transport and the ATP synthase. Cytochrome c oxidase is the component of the respiratory chain that catalyzes the reduction of oxygen to water. Electrons originating from reduced cytochrome c in the intermembrane space (IMS) are transferred via the dinuclear copper A center (CU(A)) of subunit 2 and heme A of subunit 1 to the active site in subunit 1, a binuclear center (BNC) formed by heme A3 and copper B (CU(B)). The BNC reduces molecular oxygen to 2 water molecules using 4 electrons from cytochrome c in the IMS and 4 protons from the mitochondrial matrix. This chain is Cytochrome c oxidase subunit 2 (mt:CoII), found in Drosophila bifasciata (Fruit fly).